Reading from the N-terminus, the 169-residue chain is S-ribosylhomocysteine lyase (169 aa).

The Fe cation site is built by H54, H58, and C128.

The protein belongs to the LuxS family. Homodimer. The cofactor is Fe cation.

It carries out the reaction S-(5-deoxy-D-ribos-5-yl)-L-homocysteine = (S)-4,5-dihydroxypentane-2,3-dione + L-homocysteine. In terms of biological role, involved in the synthesis of autoinducer 2 (AI-2) which is secreted by bacteria and is used to communicate both the cell density and the metabolic potential of the environment. The regulation of gene expression in response to changes in cell density is called quorum sensing. Catalyzes the transformation of S-ribosylhomocysteine (RHC) to homocysteine (HC) and 4,5-dihydroxy-2,3-pentadione (DPD). This chain is S-ribosylhomocysteine lyase, found in Shewanella woodyi (strain ATCC 51908 / MS32).